The chain runs to 479 residues: ATP synthase subunit beta (479 aa).

153–160 provides a ligand contact to ATP; it reads GGAGVGKT.

Belongs to the ATPase alpha/beta chains family. F-type ATPases have 2 components, CF(1) - the catalytic core - and CF(0) - the membrane proton channel. CF(1) has five subunits: alpha(3), beta(3), gamma(1), delta(1), epsilon(1). CF(0) has three main subunits: a(1), b(2) and c(9-12). The alpha and beta chains form an alternating ring which encloses part of the gamma chain. CF(1) is attached to CF(0) by a central stalk formed by the gamma and epsilon chains, while a peripheral stalk is formed by the delta and b chains.

Its subcellular location is the cell membrane. It catalyses the reaction ATP + H2O + 4 H(+)(in) = ADP + phosphate + 5 H(+)(out). Produces ATP from ADP in the presence of a proton gradient across the membrane. The catalytic sites are hosted primarily by the beta subunits. The protein is ATP synthase subunit beta of Lactobacillus delbrueckii subsp. bulgaricus (strain ATCC 11842 / DSM 20081 / BCRC 10696 / JCM 1002 / NBRC 13953 / NCIMB 11778 / NCTC 12712 / WDCM 00102 / Lb 14).